The primary structure comprises 265 residues: Synaptoporin (265 aa).

The Cytoplasmic segment spans residues 1-4 (MCMV). Positions 1-202 (MCMVIFAPLF…NIWFVFKETG (202 aa)) constitute an MARVEL domain. Residues 5–25 (IFAPLFAIFAFATCGGYSGGL) form a helical membrane-spanning segment. The Vesicular portion of the chain corresponds to 26 to 81 (RLSVDCVNKTESNLSIDIAFAYPFRLHQVTFEVPTCEGKERQKLALIGDSSSSAEF). Residues N33 and N38 are each glycosylated (N-linked (GlcNAc...) asparagine). The chain crosses the membrane as a helical span at residues 82–102 (FVTVAVFAFLYSLAATVVYIF). The Cytoplasmic portion of the chain corresponds to 103 to 114 (FQNKYRENNRGP). A helical transmembrane segment spans residues 115–135 (LIDFIVTVVFSFLWLVGSSAW). At 136-177 (AKGLSDVKVATDPKEVLLLMSACKQPSNKCMAIHSPVMSSLN) the chain is on the vesicular side. Residues 178 to 198 (TSVVFGFLNFILWAGNIWFVF) form a helical membrane-spanning segment. Topologically, residues 199-265 (KETGWHSSGQ…TGPTSFTNQI (67 aa)) are cytoplasmic. 5 tandem repeats follow at residues 210–214 (YLSDP), 222–226 (YNQGG), 227–231 (YNQDS), 232–236 (YGSSS), and 238–242 (YSQQA). The interval 210 to 242 (YLSDPMEKHSSSYNQGGYNQDSYGSSSGYSQQA) is 5 X approximate repeats. S212 carries the phosphoserine modification. The tract at residues 221–265 (SYNQGGYNQDSYGSSSGYSQQASLGPTSDEFGQQPTGPTSFTNQI) is disordered. The span at 224–243 (QGGYNQDSYGSSSGYSQQAS) shows a compositional bias: low complexity. Positions 244–265 (LGPTSDEFGQQPTGPTSFTNQI) are enriched in polar residues.

Belongs to the synaptophysin/synaptobrevin family.

It localises to the cytoplasmic vesicle. The protein resides in the secretory vesicle. The protein localises to the synaptic vesicle membrane. It is found in the synapse. Its subcellular location is the synaptosome. Its function is as follows. Intrinsic membrane protein of small synaptic vesicles. Probable vesicular channel protein. The sequence is that of Synaptoporin (SYNPR) from Homo sapiens (Human).